The primary structure comprises 207 residues: Serotonin N-acetyltransferase (207 aa).

The disordered stretch occupies residues 1–28 (MSMQSTHPPKPEAPRLPPGIPESPSCQR). Residue Thr-31 is modified to Phosphothreonine; by PKA. The 168-residue stretch at 35 to 202 (SEFRCLTPED…CSLRDHPFLR (168 aa)) folds into the N-acetyltransferase domain. Residue Leu-124 coordinates substrate. Residues 124–126 (LAV) and 132–137 (QQGRGP) each bind acetyl-CoA. Position 159 (Met-159) interacts with substrate. 168 to 170 (YER) contributes to the acetyl-CoA binding site. The residue at position 205 (Ser-205) is a Phosphoserine.

It belongs to the acetyltransferase family. AANAT subfamily. As to quaternary structure, monomer. Interacts with several 14-3-3 proteins, including YWHAB, YWHAE, YWHAG and YWHAZ, preferentially when phosphorylated at Thr-31. Phosphorylation on Ser-205 also allows binding to YWHAZ, but with lower affinity. The interaction with YWHAZ considerably increases affinity for arylalkylamines and acetyl-CoA and protects the enzyme from dephosphorylation and proteasomal degradation. It may also prevent thiol-dependent inactivation. Post-translationally, cAMP-dependent phosphorylation on both N-terminal Thr-31 and C-terminal Ser-205 regulates AANAT activity by promoting interaction with 14-3-3 proteins.

It localises to the cytoplasm. It carries out the reaction a 2-arylethylamine + acetyl-CoA = an N-acetyl-2-arylethylamine + CoA + H(+). The protein operates within aromatic compound metabolism; melatonin biosynthesis; melatonin from serotonin: step 1/2. In terms of biological role, controls the night/day rhythm of melatonin production in the pineal gland. Catalyzes the N-acetylation of serotonin into N-acetylserotonin, the penultimate step in the synthesis of melatonin. The polypeptide is Serotonin N-acetyltransferase (AANAT) (Pan troglodytes (Chimpanzee)).